The chain runs to 334 residues: Glycerol-3-phosphate dehydrogenase [NAD(P)+] (334 aa).

W13, R33, and K106 together coordinate NADPH. The sn-glycerol 3-phosphate site is built by K106, G137, and S139. A141 is an NADPH binding site. Sn-glycerol 3-phosphate contacts are provided by K192, D245, S255, R256, and N257. The active-site Proton acceptor is the K192. R256 contributes to the NADPH binding site. Residues V280 and E282 each contribute to the NADPH site.

This sequence belongs to the NAD-dependent glycerol-3-phosphate dehydrogenase family.

The protein resides in the cytoplasm. The enzyme catalyses sn-glycerol 3-phosphate + NAD(+) = dihydroxyacetone phosphate + NADH + H(+). The catalysed reaction is sn-glycerol 3-phosphate + NADP(+) = dihydroxyacetone phosphate + NADPH + H(+). It participates in membrane lipid metabolism; glycerophospholipid metabolism. Catalyzes the reduction of the glycolytic intermediate dihydroxyacetone phosphate (DHAP) to sn-glycerol 3-phosphate (G3P), the key precursor for phospholipid synthesis. This chain is Glycerol-3-phosphate dehydrogenase [NAD(P)+], found in Chlamydia pneumoniae (Chlamydophila pneumoniae).